Consider the following 143-residue polypeptide: Beta/delta-urticatoxin-Uf2b (143 aa).

The N-terminal stretch at 1–18 is a signal peptide; the sequence is MGAIVLVALMALVASSSA. A propeptide spanning residues 19 to 80 is cleaved from the precursor; sequence FSDIEHNIMK…MMLSGRPQPN (62 aa). Cystine bridges form between Cys-83–Cys-100, Cys-90–Cys-105, Cys-99–Cys-113, Cys-115–Cys-129, Cys-122–Cys-134, and Cys-128–Cys-142.

Belongs to the urticatoxin-2 family. As to expression, expressed in trichomes, that are stiff epidermal hairs located on the surface of petioles and leaves.

It is found in the secreted. In terms of biological role, plant defense neurotoxin that causes pain and systemic symptoms in mammals via modulation of voltage-gated sodium channels (Nav). Potent modulator of human Nav1.5/SCN5A (EC(50)=55 nM), Nav1.6/SCN8A (EC(50)=0.86 nM), and Nav1.7/SCN9A (EC(50)=208 nM), where it shifts the activation threshold to more negative potentials and delays fast inactivation. Also shifts the voltage-dependence of steady-state fast inactivation of Nav1.6/SCN8A, but not that of Nav1.5/SCN5A or Nav1.7/SCN9A. On Nav1.7/SCN9A, principally acts by binding to extracellular loops of domain IV (Nav site 3). In vivo, intraplantar injection into mice causes numerous dose-dependent, immediate, and long-lasting spontaneous pain behaviors, while no swelling is observed in the injected paw. At the highest doses tested, systemic symptoms including hypokinesia and hypersalivation are observed. The protein is Beta/delta-urticatoxin-Uf2b of Urtica ferox (Tree nettle).